Here is a 103-residue protein sequence, read N- to C-terminus: Small ribosomal subunit protein uS10 (103 aa).

This sequence belongs to the universal ribosomal protein uS10 family. In terms of assembly, part of the 30S ribosomal subunit.

Functionally, involved in the binding of tRNA to the ribosomes. This chain is Small ribosomal subunit protein uS10, found in Shewanella baltica (strain OS223).